The sequence spans 203 residues: dCTP deaminase (203 aa).

DCTP is bound by residues 105–110 (RSSLGR), Asp123, 131–133 (TLE), Gln152, Tyr166, Lys173, and Gln177. Residue Glu133 is the Proton donor/acceptor of the active site. The disordered stretch occupies residues 164-203 (RPYGVERGSKYQDQDGPQASRIGSDPEFHSDENQAAEHES). The span at 166 to 176 (YGVERGSKYQD) shows a compositional bias: basic and acidic residues. The span at 187-203 (SDPEFHSDENQAAEHES) shows a compositional bias: basic and acidic residues.

Belongs to the dCTP deaminase family. Homotrimer.

It catalyses the reaction dCTP + H2O + H(+) = dUTP + NH4(+). The protein operates within pyrimidine metabolism; dUMP biosynthesis; dUMP from dCTP (dUTP route): step 1/2. Catalyzes the deamination of dCTP to dUTP. This is dCTP deaminase from Halorubrum lacusprofundi (strain ATCC 49239 / DSM 5036 / JCM 8891 / ACAM 34).